Consider the following 276-residue polypeptide: Non-heme chloroperoxidase (276 aa).

Residues 24-254 form the AB hydrolase-1 domain; it reads PVVFHHGWPL…NATLKSYEGL (231 aa). Active-site residues include Ser97, Asp227, and His256.

The protein belongs to the AB hydrolase superfamily. Bacterial non-heme haloperoxidase / perhydrolase family. As to quaternary structure, homodimer.

The polypeptide is Non-heme chloroperoxidase (cpo) (Streptomyces lividans).